Here is a 1151-residue protein sequence, read N- to C-terminus: Error-prone DNA polymerase (1151 aa).

Residues 1108–1151 (HPVPSGDALIEPLNDDRRDHADAPAQKIRHPRNVRILPPSRDFH) are disordered.

This sequence belongs to the DNA polymerase type-C family. DnaE2 subfamily.

It is found in the cytoplasm. It carries out the reaction DNA(n) + a 2'-deoxyribonucleoside 5'-triphosphate = DNA(n+1) + diphosphate. In terms of biological role, DNA polymerase involved in damage-induced mutagenesis and translesion synthesis (TLS). It is not the major replicative DNA polymerase. This Bradyrhizobium diazoefficiens (strain JCM 10833 / BCRC 13528 / IAM 13628 / NBRC 14792 / USDA 110) protein is Error-prone DNA polymerase.